The following is a 186-amino-acid chain: Elongation factor P (186 aa).

This sequence belongs to the elongation factor P family.

Its subcellular location is the cytoplasm. It functions in the pathway protein biosynthesis; polypeptide chain elongation. Involved in peptide bond synthesis. Stimulates efficient translation and peptide-bond synthesis on native or reconstituted 70S ribosomes in vitro. Probably functions indirectly by altering the affinity of the ribosome for aminoacyl-tRNA, thus increasing their reactivity as acceptors for peptidyl transferase. In Shewanella baltica (strain OS223), this protein is Elongation factor P.